The primary structure comprises 149 residues: uncharacterized protein (149 aa).

Residues 1 to 149 (MNIRQAKTSD…VHYCLNVPAK (149 aa)) form the N-acetyltransferase domain.

The protein belongs to the acetyltransferase family.

This is an uncharacterized protein from Bacillus subtilis (strain 168).